Reading from the N-terminus, the 792-residue chain is Probable exo-1,4-beta-xylosidase xlnD (792 aa).

The N-terminal stretch at 1–20 is a signal peptide; sequence MSAIKSIATVLAAILPSVLA. Asn23, Asn87, Asn142, and Asn246 each carry an N-linked (GlcNAc...) asparagine glycan. Asp310 is a catalytic residue. Residues Asn326, Asn385, Asn391, Asn404, Asn438, Asn475, Asn479, Asn516, Asn677, and Asn699 are each glycosylated (N-linked (GlcNAc...) asparagine).

It belongs to the glycosyl hydrolase 3 family.

Its subcellular location is the secreted. It carries out the reaction Hydrolysis of (1-&gt;4)-beta-D-xylans, to remove successive D-xylose residues from the non-reducing termini.. It functions in the pathway glycan degradation; xylan degradation. Functionally, xylan 1,4-beta-xylosidase involved in the hydrolysis of xylan, a major structural heterogeneous polysaccharide found in plant biomass representing the second most abundant polysaccharide in the biosphere, after cellulose. The sequence is that of Probable exo-1,4-beta-xylosidase xlnD (xlnD) from Aspergillus clavatus (strain ATCC 1007 / CBS 513.65 / DSM 816 / NCTC 3887 / NRRL 1 / QM 1276 / 107).